The primary structure comprises 128 residues: Large ribosomal subunit protein mL55 (128 aa).

The transit peptide at 1 to 33 directs the protein to the mitochondrion; sequence MAAVGSLLGRLRQSTVKATGPALRRLHTSSWRA. S85 is modified (phosphoserine).

It belongs to the mitochondrion-specific ribosomal protein mL55 family. Component of the mitochondrial large ribosomal subunit (mt-LSU). Mature mammalian 55S mitochondrial ribosomes consist of a small (28S) and a large (39S) subunit. The 28S small subunit contains a 12S ribosomal RNA (12S mt-rRNA) and 30 different proteins. The 39S large subunit contains a 16S rRNA (16S mt-rRNA), a copy of mitochondrial valine transfer RNA (mt-tRNA(Val)), which plays an integral structural role, and 52 different proteins.

Its subcellular location is the mitochondrion. This is Large ribosomal subunit protein mL55 (MRPL55) from Homo sapiens (Human).